The primary structure comprises 807 residues: Sucrose synthase 1 (807 aa).

Residues 272–748 are GT-B glycosyltransferase; sequence MMFNVVILSP…GLKRIYEKYT (477 aa).

Belongs to the glycosyltransferase 1 family. Plant sucrose synthase subfamily. In terms of assembly, forms homotetramers. In endosperm it forms both homotetramers and heterotetramers with SS2, all three possible heterotetramers are formed. As to expression, highly expressed in developing endosperm and in roots and, at lower levels, in coleoptiles and aleurone. In 3 day old roots it is detected in cap cells and along the vascular strand, starting just after the meristemic region. In 9 day old leaves it is found in the phloem. In seeds it is distributed throughout the endosperm and also found in the assimilate-unloading tissues, the nucellar projection, the vascular area and at a high concentration in the chalazal region.

It catalyses the reaction an NDP-alpha-D-glucose + D-fructose = a ribonucleoside 5'-diphosphate + sucrose + H(+). Its function is as follows. Sucrose-cleaving enzyme that provides UDP-glucose and fructose for various metabolic pathways. In Hordeum vulgare (Barley), this protein is Sucrose synthase 1 (SS1).